We begin with the raw amino-acid sequence, 446 residues long: tRNA-2-methylthio-N(6)-dimethylallyladenosine synthase (446 aa).

The MTTase N-terminal domain maps to 8–124 (KTYRVKSFGC…LPGMIDAAVA (117 aa)). [4Fe-4S] cluster-binding residues include C17, C53, C87, C160, C164, and C167. The 233-residue stretch at 146 to 378 (RKSAPSAFLT…QAALNRDQAA (233 aa)) folds into the Radical SAM core domain. In terms of domain architecture, TRAM spans 381–442 (AGSVGRTCEV…PNSLAGQLLE (62 aa)).

The protein belongs to the methylthiotransferase family. MiaB subfamily. In terms of assembly, monomer. The cofactor is [4Fe-4S] cluster.

Its subcellular location is the cytoplasm. It catalyses the reaction N(6)-dimethylallyladenosine(37) in tRNA + (sulfur carrier)-SH + AH2 + 2 S-adenosyl-L-methionine = 2-methylsulfanyl-N(6)-dimethylallyladenosine(37) in tRNA + (sulfur carrier)-H + 5'-deoxyadenosine + L-methionine + A + S-adenosyl-L-homocysteine + 2 H(+). Catalyzes the methylthiolation of N6-(dimethylallyl)adenosine (i(6)A), leading to the formation of 2-methylthio-N6-(dimethylallyl)adenosine (ms(2)i(6)A) at position 37 in tRNAs that read codons beginning with uridine. This Erythrobacter litoralis (strain HTCC2594) protein is tRNA-2-methylthio-N(6)-dimethylallyladenosine synthase.